Reading from the N-terminus, the 115-residue chain is Large ribosomal subunit protein bL19 (115 aa).

The protein belongs to the bacterial ribosomal protein bL19 family.

Its function is as follows. This protein is located at the 30S-50S ribosomal subunit interface and may play a role in the structure and function of the aminoacyl-tRNA binding site. This chain is Large ribosomal subunit protein bL19, found in Clostridium perfringens (strain ATCC 13124 / DSM 756 / JCM 1290 / NCIMB 6125 / NCTC 8237 / Type A).